The primary structure comprises 562 residues: Berberine bridge enzyme-like C-1 (562 aa).

The signal sequence occupies residues 1 to 19 (MFPLIILISFSFTFLSASA). Asn-29 and Asn-41 each carry an N-linked (GlcNAc...) asparagine glycan. Cys-33 and Cys-90 form a disulfide bridge. Residues 68–244 (NMPKPTVIIL…YAWKIRLVKV (177 aa)) enclose the FAD-binding PCMH-type domain. His-105 is modified (pros-8alpha-FAD histidine). N-linked (GlcNAc...) asparagine glycosylation is found at Asn-359, Asn-498, and Asn-558.

The protein belongs to the oxygen-dependent FAD-linked oxidoreductase family. FAD is required as a cofactor. In terms of tissue distribution, mostly expressed in roots.

The protein resides in the vacuole. It participates in alkaloid biosynthesis; nicotine biosynthesis. Its function is as follows. Involved in the biosynthesis of pyridine alkaloid natural products, leading mainly to the production of anabasine, anatabine, nicotine and nornicotine, effective deterrents against herbivores with antiparasitic and pesticide properties (neurotoxins); nornicotine serves as the precursor in the synthesis of the carcinogen compound N'-nitrosonornicotine (NNN). Catalyzes a late oxidation step subsequent to the pyridine ring condensation reaction in the biosynthesis of alkaloids. The protein is Berberine bridge enzyme-like C-1 of Nicotiana tabacum (Common tobacco).